Reading from the N-terminus, the 137-residue chain is Small ribosomal subunit protein uS12 (137 aa).

A disordered region spans residues 1–20 (MPTTNQLVNRGRTSKVQKQN). Position 102 is a 3-methylthioaspartic acid (Asp-102).

The protein belongs to the universal ribosomal protein uS12 family. Part of the 30S ribosomal subunit. Contacts proteins S8 and S17. May interact with IF1 in the 30S initiation complex.

In terms of biological role, with S4 and S5 plays an important role in translational accuracy. Functionally, interacts with and stabilizes bases of the 16S rRNA that are involved in tRNA selection in the A site and with the mRNA backbone. Located at the interface of the 30S and 50S subunits, it traverses the body of the 30S subunit contacting proteins on the other side and probably holding the rRNA structure together. The combined cluster of proteins S8, S12 and S17 appears to hold together the shoulder and platform of the 30S subunit. The protein is Small ribosomal subunit protein uS12 of Mycoplasmopsis synoviae (strain 53) (Mycoplasma synoviae).